Reading from the N-terminus, the 188-residue chain is Putative manganese efflux pump MntP (188 aa).

6 helical membrane-spanning segments follow: residues 3 to 23, 35 to 55, 63 to 83, 104 to 126, 140 to 160, and 167 to 187; these read FYAL…VALA, IAAT…AGWV, FISE…GLKM, WMTV…GLAF, MATT…GVLF, and AGGL…LGLI.

Belongs to the MntP (TC 9.B.29) family.

It localises to the cell inner membrane. Functionally, probably functions as a manganese efflux pump. The polypeptide is Putative manganese efflux pump MntP (Neisseria meningitidis serogroup B (strain ATCC BAA-335 / MC58)).